An 84-amino-acid polypeptide reads, in one-letter code: Beta-mammal toxin Cn2 (84 aa).

An N-terminal signal peptide occupies residues 1–16; sequence LLIITACLALIGTVWA. Residues 17–82 enclose the LCN-type CS-alpha/beta domain; that stretch reads KEGYLVDKNT…VWPLPNKRCS (66 aa). Intrachain disulfides connect C28-C81, C32-C57, C41-C62, and C45-C64. A Serine amide modification is found at S82.

Belongs to the long (4 C-C) scorpion toxin superfamily. Sodium channel inhibitor family. Beta subfamily. In terms of tissue distribution, expressed by the venom gland.

It is found in the secreted. Mammal beta-toxins bind voltage-independently at site-4 of sodium channels (Nav) and shift the activation voltage to more negative potentials. This toxin is active against mammals. The sequence is that of Beta-mammal toxin Cn2 from Centruroides noxius (Mexican scorpion).